Consider the following 371-residue polypeptide: Putative glutamate--cysteine ligase 2 (371 aa).

Belongs to the glutamate--cysteine ligase type 2 family. YbdK subfamily.

It catalyses the reaction L-cysteine + L-glutamate + ATP = gamma-L-glutamyl-L-cysteine + ADP + phosphate + H(+). Functionally, ATP-dependent carboxylate-amine ligase which exhibits weak glutamate--cysteine ligase activity. In Burkholderia cenocepacia (strain HI2424), this protein is Putative glutamate--cysteine ligase 2.